Consider the following 312-residue polypeptide: Putative pyridoxal kinase BUD16 (312 aa).

Residues Ser9, Thr44, and Tyr122 each coordinate substrate. Residues 183–184 and 211–223 contribute to the ATP site; these read TS and RVPF…TGVG. Asp224 contacts substrate.

The protein belongs to the pyridoxine kinase family. The cofactor is a divalent metal cation.

The protein localises to the cytoplasm. Its subcellular location is the nucleus. It catalyses the reaction pyridoxal + ATP = pyridoxal 5'-phosphate + ADP + H(+). In terms of biological role, required for synthesis of pyridoxal-5-phosphate from vitamin B6. Important for bud site selection. In Saccharomyces cerevisiae (strain ATCC 204508 / S288c) (Baker's yeast), this protein is Putative pyridoxal kinase BUD16 (BUD16).